The chain runs to 374 residues: MRADVQNTIEKIQKSLDLLAQRLDVETAPYRLEEFNARVEDPTLWDDPDAAQKLMRERQMLVDAMATHDSIKQEMADNIELIELGEMEDDADVVSDAENALRALEETAAKKELEALLDGEADSNDTFLEVNAGAGGTESCDWASMLARMYVRWAEKKGYKVELQSMSDGDEAGIKSATYKITGLNAYGWLKSESGVHRLVRISPFDSAAKRHTSFSSVWVYPVVDDNIDIEVNPADIRIDTYRSSGAGGQHVNTTDSAVRITHHPTGIVVTSSEKSQHQNRDIAMKALKSRLYQLELDRRNAAINEAHENKGDAGWGNQIRSYVLQPYQMVKDLRTNFETSDTKGVLDGDLDGFMAATLALDASGKTRAEAQNG.

At glutamine 250 the chain carries N5-methylglutamine.

This sequence belongs to the prokaryotic/mitochondrial release factor family. Methylated by PrmC. Methylation increases the termination efficiency of RF2.

The protein localises to the cytoplasm. Functionally, peptide chain release factor 2 directs the termination of translation in response to the peptide chain termination codons UGA and UAA. This Roseobacter denitrificans (strain ATCC 33942 / OCh 114) (Erythrobacter sp. (strain OCh 114)) protein is Peptide chain release factor 2.